Here is a 312-residue protein sequence, read N- to C-terminus: 2-dehydropantoate 2-reductase (312 aa).

NADP(+) contacts are provided by residues 7–12 (GAGAMG), N105, and A131. N105 contributes to the substrate binding site. The active-site Proton donor is the K187. The substrate site is built by N191, N195, and S260. Residue E273 participates in NADP(+) binding.

The protein belongs to the ketopantoate reductase family.

Its subcellular location is the cytoplasm. It catalyses the reaction (R)-pantoate + NADP(+) = 2-dehydropantoate + NADPH + H(+). Its pathway is cofactor biosynthesis; (R)-pantothenate biosynthesis; (R)-pantoate from 3-methyl-2-oxobutanoate: step 2/2. Functionally, catalyzes the NADPH-dependent reduction of ketopantoate into pantoic acid. This chain is 2-dehydropantoate 2-reductase, found in Lactococcus lactis subsp. lactis (strain IL1403) (Streptococcus lactis).